The sequence spans 110 residues: Large ribosomal subunit protein uL22 (110 aa).

The protein belongs to the universal ribosomal protein uL22 family. As to quaternary structure, part of the 50S ribosomal subunit.

In terms of biological role, this protein binds specifically to 23S rRNA; its binding is stimulated by other ribosomal proteins, e.g. L4, L17, and L20. It is important during the early stages of 50S assembly. It makes multiple contacts with different domains of the 23S rRNA in the assembled 50S subunit and ribosome. The globular domain of the protein is located near the polypeptide exit tunnel on the outside of the subunit, while an extended beta-hairpin is found that lines the wall of the exit tunnel in the center of the 70S ribosome. This chain is Large ribosomal subunit protein uL22, found in Histophilus somni (strain 129Pt) (Haemophilus somnus).